The primary structure comprises 252 residues: 5-oxoprolinase subunit A (252 aa).

Belongs to the LamB/PxpA family. As to quaternary structure, forms a complex composed of PxpA, PxpB and PxpC.

It catalyses the reaction 5-oxo-L-proline + ATP + 2 H2O = L-glutamate + ADP + phosphate + H(+). Functionally, catalyzes the cleavage of 5-oxoproline to form L-glutamate coupled to the hydrolysis of ATP to ADP and inorganic phosphate. The polypeptide is 5-oxoprolinase subunit A (Staphylococcus epidermidis (strain ATCC 35984 / DSM 28319 / BCRC 17069 / CCUG 31568 / BM 3577 / RP62A)).